The primary structure comprises 374 residues: Alanine racemase (374 aa).

The active-site Proton acceptor; specific for D-alanine is the lysine 40. Lysine 40 is subject to N6-(pyridoxal phosphate)lysine. Substrate is bound at residue arginine 139. Tyrosine 261 (proton acceptor; specific for L-alanine) is an active-site residue. Methionine 309 contributes to the substrate binding site.

The protein belongs to the alanine racemase family. Requires pyridoxal 5'-phosphate as cofactor.

It carries out the reaction L-alanine = D-alanine. It functions in the pathway amino-acid biosynthesis; D-alanine biosynthesis; D-alanine from L-alanine: step 1/1. Functionally, catalyzes the interconversion of L-alanine and D-alanine. May also act on other amino acids. This chain is Alanine racemase (alr), found in Rhodospirillum rubrum (strain ATCC 11170 / ATH 1.1.1 / DSM 467 / LMG 4362 / NCIMB 8255 / S1).